The sequence spans 480 residues: Ribosomal protein uS12 methylthiotransferase RimO (480 aa).

The MTTase N-terminal domain occupies 14 to 135 (LSVAMVTLGC…IAARLRSIVA (122 aa)). Cys23, Cys59, Cys98, Cys193, Cys197, and Cys200 together coordinate [4Fe-4S] cluster. Residues 179-410 (LDDGPTAALK…DLVEELTSQR (232 aa)) enclose the Radical SAM core domain. In terms of domain architecture, TRAM spans 412–480 (AERLGEQVEV…EGADLDARPL (69 aa)).

The protein belongs to the methylthiotransferase family. RimO subfamily. The cofactor is [4Fe-4S] cluster.

Its subcellular location is the cytoplasm. It carries out the reaction L-aspartate(89)-[ribosomal protein uS12]-hydrogen + (sulfur carrier)-SH + AH2 + 2 S-adenosyl-L-methionine = 3-methylsulfanyl-L-aspartate(89)-[ribosomal protein uS12]-hydrogen + (sulfur carrier)-H + 5'-deoxyadenosine + L-methionine + A + S-adenosyl-L-homocysteine + 2 H(+). Functionally, catalyzes the methylthiolation of an aspartic acid residue of ribosomal protein uS12. The polypeptide is Ribosomal protein uS12 methylthiotransferase RimO (Nocardioides sp. (strain ATCC BAA-499 / JS614)).